The sequence spans 483 residues: tRNA (guanine(37)-N(1))-methyltransferase (483 aa).

The disordered stretch occupies residues 1 to 24 (MEEAATLQSLSISSSSPFPNNSSP). Positions 9-24 (SLSISSSSPFPNNSSP) are enriched in low complexity. S-adenosyl-L-methionine contacts are provided by residues His-252, 290–291 (DL), and Asn-379.

The protein belongs to the class I-like SAM-binding methyltransferase superfamily. TRM5/TYW2 family. Monomer.

Its subcellular location is the mitochondrion matrix. The protein localises to the nucleus. It localises to the cytoplasm. It carries out the reaction guanosine(37) in tRNA + S-adenosyl-L-methionine = N(1)-methylguanosine(37) in tRNA + S-adenosyl-L-homocysteine + H(+). Functionally, specifically methylates the N1 position of guanosine-37 in various cytoplasmic and mitochondrial tRNAs. Methylation is not dependent on the nature of the nucleoside 5' of the target nucleoside. This is the first step in the biosynthesis of wybutosine (yW), a modified base adjacent to the anticodon of tRNAs and required for accurate decoding. This is tRNA (guanine(37)-N(1))-methyltransferase from Ajellomyces capsulatus (strain G186AR / H82 / ATCC MYA-2454 / RMSCC 2432) (Darling's disease fungus).